The sequence spans 307 residues: Aspartate carbamoyltransferase catalytic subunit (307 aa).

Residues Arg59 and Thr60 each contribute to the carbamoyl phosphate site. Lys87 is a binding site for L-aspartate. 3 residues coordinate carbamoyl phosphate: Arg109, His139, and Gln142. 2 residues coordinate L-aspartate: Arg172 and Arg224. Ala265 and Pro266 together coordinate carbamoyl phosphate.

This sequence belongs to the aspartate/ornithine carbamoyltransferase superfamily. ATCase family. In terms of assembly, heterododecamer (2C3:3R2) of six catalytic PyrB chains organized as two trimers (C3), and six regulatory PyrI chains organized as three dimers (R2).

The enzyme catalyses carbamoyl phosphate + L-aspartate = N-carbamoyl-L-aspartate + phosphate + H(+). It participates in pyrimidine metabolism; UMP biosynthesis via de novo pathway; (S)-dihydroorotate from bicarbonate: step 2/3. Catalyzes the condensation of carbamoyl phosphate and aspartate to form carbamoyl aspartate and inorganic phosphate, the committed step in the de novo pyrimidine nucleotide biosynthesis pathway. The sequence is that of Aspartate carbamoyltransferase catalytic subunit from Streptococcus agalactiae serotype Ia (strain ATCC 27591 / A909 / CDC SS700).